A 433-amino-acid chain; its full sequence is Protein arginine N-methyltransferase 2 (433 aa).

The tract at residues 1 to 27 (MSTSGCSSEKSDFQDSTEGEEEEDTQS) is disordered. The span at 15 to 26 (DSTEGEEEEDTQ) shows a compositional bias: acidic residues. Residues 30 to 89 (LCMREYVVIRDYMAADATQLSLCFGDKVLLLSAVTQDWWWVKHNGICGYVPASYLHDALN) form the SH3 domain. The region spanning 102–416 (DEEYYGSYKT…MSVTLSWVIN (315 aa)) is the SAM-dependent MTase PRMT-type domain. Positions 115, 124, 148, 171, and 200 each coordinate S-adenosyl-L-methionine. Residues E214 and E223 contribute to the active site.

Belongs to the class I-like SAM-binding methyltransferase superfamily. Protein arginine N-methyltransferase family. Interacts with ctnnb1.

The protein resides in the cytoplasm. It localises to the nucleus. The enzyme catalyses L-arginyl-[protein] + 2 S-adenosyl-L-methionine = N(omega),N(omega)-dimethyl-L-arginyl-[protein] + 2 S-adenosyl-L-homocysteine + 2 H(+). Arginine methyltransferase that methylates the guanidino nitrogens of arginyl residues in proteins such as histones. Involved in growth regulation. Involved in embryonic dorsal development. The polypeptide is Protein arginine N-methyltransferase 2 (prmt2) (Xenopus tropicalis (Western clawed frog)).